We begin with the raw amino-acid sequence, 346 residues long: UPF0283 membrane protein VIBHAR_01918 (346 aa).

Positions 1–17 (MSELKQKQVFKEKVMHS) are enriched in basic and acidic residues. The segment at 1–28 (MSELKQKQVFKEKVMHSEEEDVSPELNT) is disordered. The next 2 helical transmembrane spans lie at 73 to 93 (LFAT…ITAI) and 98 to 118 (WLAL…LGAL).

Belongs to the UPF0283 family.

Its subcellular location is the cell inner membrane. This chain is UPF0283 membrane protein VIBHAR_01918, found in Vibrio campbellii (strain ATCC BAA-1116).